A 203-amino-acid chain; its full sequence is uncharacterized protein (203 aa).

This is an uncharacterized protein from Caldicellulosiruptor sp. (strain Rt8B.4).